The following is a 154-amino-acid chain: uncharacterized protein (154 aa).

4 helical membrane-spanning segments follow: residues 39 to 61, 65 to 87, 94 to 113, and 128 to 150; these read LLIFGSIAIAYTVIYISGLFFAR, LPYIRKILEIGISVIFYFLVSLL, VESLLLLKTLFLVQTIRVFI, and LLINIFSILGGISFFIIKLSPFT.

It is found in the cell membrane. This is an uncharacterized protein from Aquifex aeolicus (strain VF5).